Consider the following 94-residue polypeptide: Co-chaperonin GroES (94 aa).

The protein belongs to the GroES chaperonin family. As to quaternary structure, heptamer of 7 subunits arranged in a ring. Interacts with the chaperonin GroEL.

It is found in the cytoplasm. In terms of biological role, together with the chaperonin GroEL, plays an essential role in assisting protein folding. The GroEL-GroES system forms a nano-cage that allows encapsulation of the non-native substrate proteins and provides a physical environment optimized to promote and accelerate protein folding. GroES binds to the apical surface of the GroEL ring, thereby capping the opening of the GroEL channel. The polypeptide is Co-chaperonin GroES (Bacillus mycoides (strain KBAB4) (Bacillus weihenstephanensis)).